The primary structure comprises 128 residues: Disintegrin gabonin-1 (128 aa).

The signal sequence occupies residues 1-20; that stretch reads MIQVLLVIICLAVFPYQGSS. A propeptide spanning residues 21–47 is cleaved from the precursor; the sequence is IILESGNVNDYEIVYPKKVTVLPTGAM. The region spanning 47–112 is the Disintegrin domain; sequence MNSAHPCCDP…DCPRNPNKGE (66 aa). 4 cysteine pairs are disulfide-bonded: cysteine 53-cysteine 76, cysteine 67-cysteine 73, cysteine 72-cysteine 97, and cysteine 85-cysteine 104. A Cell attachment site motif is present at residues 89 to 91; the sequence is RGD. Positions 108–128 are disordered; that stretch reads PNKGESDELEWSAAATGSVLM.

The protein belongs to the disintegrin family. Dimeric disintegrin subfamily. Heterodimer with bitisgabonin (bitisgabonin-1 is the name of the heterodimer); disulfide-linked. As to expression, expressed by the venom gland.

Its subcellular location is the secreted. Its function is as follows. The heterodimer bitisgabonin-1 is a potent inhibitor of the adhesion of the RGD-dependent integrin alpha-5/beta-1 (ITGA5/ITGB1) to immobilized fibronectin. This chain is Disintegrin gabonin-1, found in Bitis gabonica (Gaboon adder).